Consider the following 55-residue polypeptide: Large ribosomal subunit protein bL33 (55 aa).

The protein belongs to the bacterial ribosomal protein bL33 family.

This is Large ribosomal subunit protein bL33 from Aromatoleum aromaticum (strain DSM 19018 / LMG 30748 / EbN1) (Azoarcus sp. (strain EbN1)).